The following is a 259-amino-acid chain: Global transcriptional regulator CodY (259 aa).

The GAF domain stretch occupies residues 1–155 (MALLQKTRKI…GATVVGMEIL (155 aa)). The segment at residues 203–222 (ASKIADRVGITRSVIVNALR) is a DNA-binding region (H-T-H motif). At serine 215 the chain carries Phosphoserine.

It belongs to the CodY family.

The protein localises to the cytoplasm. In terms of biological role, DNA-binding global transcriptional regulator which is involved in the adaptive response to starvation and acts by directly or indirectly controlling the expression of numerous genes in response to nutrient availability. During rapid exponential growth, CodY is highly active and represses genes whose products allow adaptation to nutrient depletion. This chain is Global transcriptional regulator CodY, found in Bacillus licheniformis (strain ATCC 14580 / DSM 13 / JCM 2505 / CCUG 7422 / NBRC 12200 / NCIMB 9375 / NCTC 10341 / NRRL NRS-1264 / Gibson 46).